The sequence spans 395 residues: Extracellular cysteine protease (395 aa).

Positions 1 to 30 are cleaved as a signal peptide; the sequence is MKKKLSYMITIMLAFTLSLALGLFFNSAHA. Positions 31–221 are excised as a propeptide; sequence DSLPQKNGAN…TLEYQSTRNE (191 aa). Catalysis depends on residues C245, H341, and N362.

The protein belongs to the peptidase C47 family. Proteolytically cleaved.

It is found in the secreted. The protein resides in the cell wall. Cysteine protease able to cleave elastin, insulin, myoglobin, fibronectin, fibrinogen, HMW-kininogen, alpha-1-protease inhibitor and alpha-1-antitrypsin. Along with other extracellular proteases may contribute to the colonization and infection of human tissues. The protein is Extracellular cysteine protease (ecpA) of Staphylococcus epidermidis (strain ATCC 35984 / DSM 28319 / BCRC 17069 / CCUG 31568 / BM 3577 / RP62A).